Here is a 297-residue protein sequence, read N- to C-terminus: Protoheme IX farnesyltransferase (297 aa).

A run of 9 helical transmembrane segments spans residues 23-43 (VTQL…PGLP), 49-69 (VFGT…NCLI), 90-110 (ISAA…MLVL), 117-137 (LTMW…TVIL), 144-164 (NIVI…AAVA), 171-191 (AWVL…ALAL), 215-235 (RLHI…PYII), 238-258 (SGLL…AYAW), and 277-297 (ILYL…GLLA).

This sequence belongs to the UbiA prenyltransferase family. Protoheme IX farnesyltransferase subfamily.

It localises to the cell inner membrane. It catalyses the reaction heme b + (2E,6E)-farnesyl diphosphate + H2O = Fe(II)-heme o + diphosphate. The protein operates within porphyrin-containing compound metabolism; heme O biosynthesis; heme O from protoheme: step 1/1. Functionally, converts heme B (protoheme IX) to heme O by substitution of the vinyl group on carbon 2 of heme B porphyrin ring with a hydroxyethyl farnesyl side group. The chain is Protoheme IX farnesyltransferase from Bordetella petrii (strain ATCC BAA-461 / DSM 12804 / CCUG 43448).